The primary structure comprises 373 residues: tRNA-specific 2-thiouridylase MnmA (373 aa).

ATP-binding positions include 12–19 and methionine 38; that span reads GMSGGVDS. The interval 98-100 is interaction with target base in tRNA; it reads NPD. Cysteine 103 functions as the Nucleophile in the catalytic mechanism. Cysteines 103 and 200 form a disulfide. Glycine 127 serves as a coordination point for ATP. Positions 150-152 are interaction with tRNA; it reads KDQ. Residue cysteine 200 is the Cysteine persulfide intermediate of the active site. The interval 312 to 313 is interaction with tRNA; sequence RY.

Belongs to the MnmA/TRMU family.

Its subcellular location is the cytoplasm. The enzyme catalyses S-sulfanyl-L-cysteinyl-[protein] + uridine(34) in tRNA + AH2 + ATP = 2-thiouridine(34) in tRNA + L-cysteinyl-[protein] + A + AMP + diphosphate + H(+). Functionally, catalyzes the 2-thiolation of uridine at the wobble position (U34) of tRNA, leading to the formation of s(2)U34. The sequence is that of tRNA-specific 2-thiouridylase MnmA from Streptococcus sanguinis (strain SK36).